Consider the following 317-residue polypeptide: tRNA pseudouridine synthase B (317 aa).

The active-site Nucleophile is Asp-47.

The protein belongs to the pseudouridine synthase TruB family. Type 1 subfamily.

It catalyses the reaction uridine(55) in tRNA = pseudouridine(55) in tRNA. Functionally, responsible for synthesis of pseudouridine from uracil-55 in the psi GC loop of transfer RNAs. The sequence is that of tRNA pseudouridine synthase B from Shewanella denitrificans (strain OS217 / ATCC BAA-1090 / DSM 15013).